The chain runs to 375 residues: S-(hydroxymethyl)glutathione dehydrogenase (375 aa).

Cys-40 contributes to the Zn(2+) binding site. NAD(+) is bound at residue His-41. Zn(2+) contacts are provided by His-62, Glu-63, Cys-92, Cys-95, Cys-98, Cys-106, and Cys-170. NAD(+)-binding positions include 195 to 200, Asp-219, 293 to 295, and 318 to 320; these read GLGGIG, IGV, and TAF.

It belongs to the zinc-containing alcohol dehydrogenase family. Class-III subfamily. Homotetramer. Requires Zn(2+) as cofactor.

It catalyses the reaction a primary alcohol + NAD(+) = an aldehyde + NADH + H(+). The enzyme catalyses a secondary alcohol + NAD(+) = a ketone + NADH + H(+). The catalysed reaction is S-(hydroxymethyl)glutathione + NADP(+) = S-formylglutathione + NADPH + H(+). It carries out the reaction S-(hydroxymethyl)glutathione + NAD(+) = S-formylglutathione + NADH + H(+). It catalyses the reaction S-nitrosoglutathione + NADH + H(+) = S-(hydroxysulfenamide)glutathione + NAD(+). In terms of biological role, oxidizes long-chain alcohols and, in the presence of glutathione, is able to oxidize formaldehyde. Also acts as a S-nitroso-glutathione reductase by catalyzing the NADH-dependent reduction of S-nitrosoglutathione, thereby regulating protein S-nitrosylation. The sequence is that of S-(hydroxymethyl)glutathione dehydrogenase (flhA) from Paracoccus denitrificans.